The primary structure comprises 341 residues: Tetraacyldisaccharide 4'-kinase (341 aa).

64 to 71 (AVGGSGKT) is a binding site for ATP.

It belongs to the LpxK family.

The enzyme catalyses a lipid A disaccharide + ATP = a lipid IVA + ADP + H(+). It participates in glycolipid biosynthesis; lipid IV(A) biosynthesis; lipid IV(A) from (3R)-3-hydroxytetradecanoyl-[acyl-carrier-protein] and UDP-N-acetyl-alpha-D-glucosamine: step 6/6. Its function is as follows. Transfers the gamma-phosphate of ATP to the 4'-position of a tetraacyldisaccharide 1-phosphate intermediate (termed DS-1-P) to form tetraacyldisaccharide 1,4'-bis-phosphate (lipid IVA). The chain is Tetraacyldisaccharide 4'-kinase from Azoarcus sp. (strain BH72).